We begin with the raw amino-acid sequence, 241 residues long: ATP synthase subunit a (241 aa).

The next 5 helical transmembrane spans lie at 30 to 50 (GQVF…VVIG), 91 to 111 (FIGT…LVPW), 128 to 148 (INTT…AGLS), 193 to 213 (LVVA…VMFL), and 214 to 234 (GLFT…YYIG).

The protein belongs to the ATPase A chain family. In terms of assembly, F-type ATPases have 2 components, CF(1) - the catalytic core - and CF(0) - the membrane proton channel. CF(1) has five subunits: alpha(3), beta(3), gamma(1), delta(1), epsilon(1). CF(0) has four main subunits: a, b, b' and c.

It localises to the cellular thylakoid membrane. In terms of biological role, key component of the proton channel; it plays a direct role in the translocation of protons across the membrane. This is ATP synthase subunit a from Prochlorococcus marinus (strain NATL1A).